The chain runs to 562 residues: UPF0649 protein C1442.02 (562 aa).

Ser-285 and Ser-286 each carry phosphoserine. A disordered region spans residues 288-308 (DEEIAKNADVPAEVDNNSTKA).

This sequence belongs to the UPF0649 family.

Its subcellular location is the cytoplasm. It is found in the nucleus. This Schizosaccharomyces pombe (strain 972 / ATCC 24843) (Fission yeast) protein is UPF0649 protein C1442.02.